The sequence spans 245 residues: Ubiquinone/menaquinone biosynthesis C-methyltransferase UbiE (245 aa).

Residues T71, D92, and 118-119 each bind S-adenosyl-L-methionine; that span reads DA.

Belongs to the class I-like SAM-binding methyltransferase superfamily. MenG/UbiE family.

The enzyme catalyses a 2-demethylmenaquinol + S-adenosyl-L-methionine = a menaquinol + S-adenosyl-L-homocysteine + H(+). It carries out the reaction a 2-methoxy-6-(all-trans-polyprenyl)benzene-1,4-diol + S-adenosyl-L-methionine = a 5-methoxy-2-methyl-3-(all-trans-polyprenyl)benzene-1,4-diol + S-adenosyl-L-homocysteine + H(+). Its pathway is quinol/quinone metabolism; menaquinone biosynthesis; menaquinol from 1,4-dihydroxy-2-naphthoate: step 2/2. It participates in cofactor biosynthesis; ubiquinone biosynthesis. Methyltransferase required for the conversion of demethylmenaquinol (DMKH2) to menaquinol (MKH2) and the conversion of 2-polyprenyl-6-methoxy-1,4-benzoquinol (DDMQH2) to 2-polyprenyl-3-methyl-6-methoxy-1,4-benzoquinol (DMQH2). This Neisseria meningitidis serogroup C (strain 053442) protein is Ubiquinone/menaquinone biosynthesis C-methyltransferase UbiE.